The primary structure comprises 218 residues: Small ribosomal subunit protein uS3 (218 aa).

The KH type-2 domain maps to I38–K106.

The protein belongs to the universal ribosomal protein uS3 family. As to quaternary structure, part of the 30S ribosomal subunit. Forms a tight complex with proteins S10 and S14.

Functionally, binds the lower part of the 30S subunit head. Binds mRNA in the 70S ribosome, positioning it for translation. This is Small ribosomal subunit protein uS3 from Geobacillus sp. (strain WCH70).